A 218-amino-acid chain; its full sequence is Transmembrane gamma-carboxyglutamic acid protein 1 (218 aa).

Positions 1 to 20 (MGRVFLTGEKANSILKRYPR) are excised as a propeptide. The 46-residue stretch at 21 to 66 (ANGFFEEIRQGNIERECKEEFCTFEEAREAFENNEKTKEFWSTYTK) folds into the Gla domain. The Extracellular portion of the chain corresponds to 21 to 83 (ANGFFEEIRQ…RGSDWFQFYL (63 aa)). A disulfide bridge connects residues Cys37 and Cys42. A helical transmembrane segment spans residues 84–106 (TFPLIFGLFIILLVIFLIWRCFL). The Cytoplasmic portion of the chain corresponds to 107–218 (RNKTRRQTVT…PMVPVVTTIK (112 aa)). The tract at residues 161 to 195 (TRLSNCDPPPTYEEATGQVNLQRSETEPHLDPPPE) is disordered.

In terms of processing, gla residues are produced after subsequent post-translational modifications of glutamate by a vitamin K-dependent gamma-carboxylase. In terms of tissue distribution, highly expressed in the spinal cord.

The protein localises to the membrane. The polypeptide is Transmembrane gamma-carboxyglutamic acid protein 1 (PRRG1) (Homo sapiens (Human)).